The primary structure comprises 485 residues: Membrane-bound lytic murein transglycosylase F (485 aa).

Positions 1-29 are cleaved as a signal peptide; the sequence is MFAHTALRQRCAKWLFATGLFLLLGACVE. The tract at residues 30 to 267 is non-LT domain; sequence KPSTLERVKE…RLKDRYYGHV (238 aa). Residues 268–485 form an LT domain region; it reads DVLGYVGAYT…DKPADQSPPM (218 aa). Glu314 is a catalytic residue. The tract at residues 465-485 is disordered; it reads EGNLHVPGVNKDKPADQSPPM.

It in the N-terminal section; belongs to the bacterial solute-binding protein 3 family. In the C-terminal section; belongs to the transglycosylase Slt family.

The protein resides in the cell outer membrane. It catalyses the reaction Exolytic cleavage of the (1-&gt;4)-beta-glycosidic linkage between N-acetylmuramic acid (MurNAc) and N-acetylglucosamine (GlcNAc) residues in peptidoglycan, from either the reducing or the non-reducing ends of the peptidoglycan chains, with concomitant formation of a 1,6-anhydrobond in the MurNAc residue.. In terms of biological role, murein-degrading enzyme that degrades murein glycan strands and insoluble, high-molecular weight murein sacculi, with the concomitant formation of a 1,6-anhydromuramoyl product. Lytic transglycosylases (LTs) play an integral role in the metabolism of the peptidoglycan (PG) sacculus. Their lytic action creates space within the PG sacculus to allow for its expansion as well as for the insertion of various structures such as secretion systems and flagella. This is Membrane-bound lytic murein transglycosylase F from Pseudomonas putida (strain GB-1).